A 137-amino-acid polypeptide reads, in one-letter code: Small ribosomal subunit protein uS12 (137 aa).

2 disordered regions span residues 1 to 21 (MPTI…KSDS) and 34 to 57 (VHTK…TPKK). Asp-102 bears the 3-methylthioaspartic acid mark.

The protein belongs to the universal ribosomal protein uS12 family. In terms of assembly, part of the 30S ribosomal subunit. Contacts proteins S8 and S17. May interact with IF1 in the 30S initiation complex.

Functionally, with S4 and S5 plays an important role in translational accuracy. Its function is as follows. Interacts with and stabilizes bases of the 16S rRNA that are involved in tRNA selection in the A site and with the mRNA backbone. Located at the interface of the 30S and 50S subunits, it traverses the body of the 30S subunit contacting proteins on the other side and probably holding the rRNA structure together. The combined cluster of proteins S8, S12 and S17 appears to hold together the shoulder and platform of the 30S subunit. This Streptococcus equi subsp. zooepidemicus (strain H70) protein is Small ribosomal subunit protein uS12.